The sequence spans 176 residues: CASP-like protein 5A1 (176 aa).

Over 1–35 (MNPSHPAVHPVEAPPTDVHHAPRVRMKDYQGMPGT) the chain is Cytoplasmic. A helical membrane pass occupies residues 36–56 (LGGLALRLGQFCFAVVAFSIM). Over 57-67 (LSTDDFSTVTA) the chain is Extracellular. Residues 68-88 (FCYLVAATVLQCLWSLALAVI) traverse the membrane as a helical segment. Residues 89 to 102 (DGYALLVKRSLRNS) lie on the Cytoplasmic side of the membrane. A helical membrane pass occupies residues 103-123 (LVVSLFVVGDGVTATLTFAAA). At 124–152 (CASAGITVLIGNDLRECDQNHCGKYETAT) the chain is on the extracellular side. Residues 153-173 (AMAFLSWFMVSPSFLLTFWLL) form a helical membrane-spanning segment. Residues 174–176 (ASR) lie on the Cytoplasmic side of the membrane.

Belongs to the Casparian strip membrane proteins (CASP) family. As to quaternary structure, homodimer and heterodimers.

It localises to the cell membrane. The polypeptide is CASP-like protein 5A1 (Ginkgo biloba (Ginkgo)).